The following is a 439-amino-acid chain: O-methyltransferase aurJ (439 aa).

Asp283 is a binding site for S-adenosyl-L-methionine. The active-site Proton acceptor is His338.

Belongs to the class I-like SAM-binding methyltransferase superfamily. Cation-independent O-methyltransferase family. COMT subfamily.

It carries out the reaction norrubrofusarin + S-adenosyl-L-methionine = rubrofusarin + S-adenosyl-L-homocysteine + H(+). It participates in pigment biosynthesis. In terms of biological role, O-methyltransferase; part of the gene cluster that mediates the biosynthesis of aurofusarin, a red mycelium pigment which is acting as a mycotoxin. The first step is performed by the polyketide synthase which condenses one acetyl-CoA and 6 malonyl-CoA units to form the first intermediate, the cyclic heptaketide and yellow pigment YWA1. The C2 hydroxyl group in the pyrone ring of YWA1 is probably formed during ring closure by an aldol-type cyclization reaction. The dehydratase aurZ then acts as the first tailoring enzyme in the aurofusarin biosynthetic pathway by converting YWA1 to nor-rubrofusarin. Nor-rubrofusarin is then methylated to rubrofusarin by the O-methyltransferase aurJ. Rubrofusarin is then transported across the plasma membrane by the rubrofusarin-specific pump aurT for further enzymatic processing by the extracellular complex composed of GIP1, aurF, aurO and aurS to yield aurofusarin. The chain is O-methyltransferase aurJ from Gibberella zeae (strain ATCC MYA-4620 / CBS 123657 / FGSC 9075 / NRRL 31084 / PH-1) (Wheat head blight fungus).